Here is a 507-residue protein sequence, read N- to C-terminus: Probable cytosol aminopeptidase (507 aa).

K275 and D280 together coordinate Mn(2+). The active site involves K287. Residues D298, D357, and E359 each coordinate Mn(2+). R361 is a catalytic residue.

It belongs to the peptidase M17 family. Mn(2+) is required as a cofactor.

It is found in the cytoplasm. The enzyme catalyses Release of an N-terminal amino acid, Xaa-|-Yaa-, in which Xaa is preferably Leu, but may be other amino acids including Pro although not Arg or Lys, and Yaa may be Pro. Amino acid amides and methyl esters are also readily hydrolyzed, but rates on arylamides are exceedingly low.. It carries out the reaction Release of an N-terminal amino acid, preferentially leucine, but not glutamic or aspartic acids.. Its function is as follows. Presumably involved in the processing and regular turnover of intracellular proteins. Catalyzes the removal of unsubstituted N-terminal amino acids from various peptides. The sequence is that of Probable cytosol aminopeptidase from Rhodopirellula baltica (strain DSM 10527 / NCIMB 13988 / SH1).